A 389-amino-acid chain; its full sequence is Mannitol-1-phosphate 5-dehydrogenase (389 aa).

An NAD(+)-binding site is contributed by 5–16 (AVHFGAGNIGRG). K215 is a catalytic residue.

This sequence belongs to the mannitol dehydrogenase family. In terms of assembly, monomer.

The enzyme catalyses D-mannitol 1-phosphate + NAD(+) = beta-D-fructose 6-phosphate + NADH + H(+). Its function is as follows. Catalyzes the NAD(H)-dependent interconversion of D-fructose 6-phosphate and D-mannitol 1-phosphate in the mannitol metabolic pathway. This Sclerotinia sclerotiorum (strain ATCC 18683 / 1980 / Ss-1) (White mold) protein is Mannitol-1-phosphate 5-dehydrogenase.